A 317-amino-acid polypeptide reads, in one-letter code: L-lactate dehydrogenase (317 aa).

Residues V17, D38, K43, Y69, and 83–84 (GA) each bind NAD(+). Residues Q86 and R92 each coordinate substrate. Residues S105, 122–124 (ATN), and S147 each bind NAD(+). 124–127 (NPVD) is a substrate binding site. 152-155 (DTAR) lines the substrate pocket. Beta-D-fructose 1,6-bisphosphate contacts are provided by R157 and H172. H179 (proton acceptor) is an active-site residue. Residue Y224 is modified to Phosphotyrosine. Residue T233 participates in substrate binding.

The protein belongs to the LDH/MDH superfamily. LDH family. In terms of assembly, homotetramer.

Its subcellular location is the cytoplasm. The enzyme catalyses (S)-lactate + NAD(+) = pyruvate + NADH + H(+). The protein operates within fermentation; pyruvate fermentation to lactate; (S)-lactate from pyruvate: step 1/1. With respect to regulation, allosterically activated by fructose 1,6-bisphosphate (FBP). Its function is as follows. Catalyzes the conversion of lactate to pyruvate. The protein is L-lactate dehydrogenase of Bacillus caldotenax.